Reading from the N-terminus, the 169-residue chain is Peptide deformylase (169 aa).

Residues cysteine 92 and histidine 134 each coordinate Fe cation. Glutamate 135 is a catalytic residue. Histidine 138 provides a ligand contact to Fe cation.

This sequence belongs to the polypeptide deformylase family. The cofactor is Fe(2+).

The enzyme catalyses N-terminal N-formyl-L-methionyl-[peptide] + H2O = N-terminal L-methionyl-[peptide] + formate. Removes the formyl group from the N-terminal Met of newly synthesized proteins. Requires at least a dipeptide for an efficient rate of reaction. N-terminal L-methionine is a prerequisite for activity but the enzyme has broad specificity at other positions. This chain is Peptide deformylase, found in Cellvibrio japonicus (strain Ueda107) (Pseudomonas fluorescens subsp. cellulosa).